A 940-amino-acid chain; its full sequence is Reticulon-3 (940 aa).

The segment covering 1-24 has biased composition (low complexity); sequence MAESSAATQSPSVSSSSSGAEPST. Disordered stretches follow at residues 1 to 32, 71 to 91, and 129 to 182; these read MAES…GGSP, SSEI…LGSH, and DIPC…ALDL. Ala2 carries the N-acetylalanine modification. Over 2–771 the chain is Cytoplasmic; sequence AESSAATQSP…KKTGFVFGTT (770 aa). Ser31 is modified (phosphoserine). Phosphoserine is present on residues Ser196, Ser204, Ser209, Ser212, Ser249, and Ser282. Disordered regions lie at residues 314–335, 381–405, and 428–512; these read AKQQ…RSEH, KGYL…ISGS, and EVTE…LEGQ. Acidic residues predominate over residues 430-447; it reads TEVDSSGESDDTVIEDTT. Residues 472–490 are compositionally biased toward basic and acidic residues; the sequence is TSERENKETTSHETVRSEM. Residues 491–512 show a composition bias toward polar residues; the sequence is YENSEQQQAHAETPTQRSLEGQ. Position 508 is a phosphoserine (Ser508). The residue at position 572 (Thr572) is a Phosphothreonine. 3 positions are modified to phosphoserine: Ser575, Ser576, and Ser652. Disordered regions lie at residues 623–655 and 672–701; these read NKLS…SSDL and QVQA…SDIL. Over residues 689–699 the composition is skewed to polar residues; the sequence is DPQSGPQNSSD. In terms of domain architecture, Reticulon spans 752 to 940; that stretch reads VHDLIFWRDV…LPGIAKKKAE (189 aa). Positions 772–795 form an intramembrane region, helical; that stretch reads LIMLLSLAAFSVISVVSYLILALL. Over 796–852 the chain is Cytoplasmic; sequence SVTISFRVYKSVIQAVQKSEEGHPFKAYLDVDITLSSEAFHSYMNAAMVHVNKALKL. The segment at residues 853–875 is an intramembrane region (helical); it reads IIRLFLVEDLVDSLKLAVFMWLM. Residues 876 to 879 lie on the Cytoplasmic side of the membrane; sequence TYVG. Residues 880–902 constitute an intramembrane region (helical); the sequence is AVFNGITLLILAELLVFSVPIVY. The segment at 895-940 is interaction with FADD; that stretch reads VFSVPIVYEKYKTQIDHYVGIARDQTKSIVEKIQAKLPGIAKKKAE. The Cytoplasmic segment spans residues 903–940; that stretch reads EKYKTQIDHYVGIARDQTKSIVEKIQAKLPGIAKKKAE. Positions 908–910 are interaction with BACE1; sequence QID.

Homodimer. Interacts with RTN4. Isoform 2 interacts with BACE1, BACE2, BCL2 and FADD. Interacts with ATL2. Interacts with TMEM33. Interacts with ATL1. Interacts with ZFYVE27 and with KIF5A in a ZFYVE27-dependent manner. Interacts with RIGI. Interacts with TRIM25. In terms of tissue distribution, present in olfactory bulb, olfactory epithelium and retina (at protein level).

The protein resides in the endoplasmic reticulum membrane. The protein localises to the golgi apparatus membrane. In terms of biological role, may be involved in membrane trafficking in the early secretory pathway. Inhibits BACE1 activity and amyloid precursor protein processing. May induce caspase-8 cascade and apoptosis. May favor BCL2 translocation to the mitochondria upon endoplasmic reticulum stress. Induces the formation of endoplasmic reticulum tubules. Acts also as an inflammation-resolving regulator by interacting with both TRIM25 and RIGI, subsequently impairing RIGI 'Lys-63'-linked polyubiquitination leading to IRF3 and NF-kappa-B inhibition. In Rattus norvegicus (Rat), this protein is Reticulon-3 (Rtn3).